We begin with the raw amino-acid sequence, 439 residues long: 26S proteasome regulatory subunit 6A (439 aa).

Residue M1 is modified to N-acetylmethionine. S9 carries the phosphoserine modification. Residue 227–234 (GPPGTGKT) participates in ATP binding. The residue at position 376 (S376) is a Phosphoserine.

This sequence belongs to the AAA ATPase family. As to quaternary structure, component of the 19S proteasome regulatory particle complex. The 26S proteasome consists of a 20S core particle (CP) and two 19S regulatory subunits (RP). The regulatory particle is made of a lid composed of 9 subunits, a base containing 6 ATPases including PSMC3 and few additional components. Interacts with PAAF1. In terms of assembly, (Microbial infection) Interacts with HIV-1 Tat. Post-translationally, sumoylated by UBE2I in response to MEKK1-mediated stimuli.

It localises to the cytoplasm. Its subcellular location is the nucleus. In terms of biological role, component of the 26S proteasome, a multiprotein complex involved in the ATP-dependent degradation of ubiquitinated proteins. This complex plays a key role in the maintenance of protein homeostasis by removing misfolded or damaged proteins, which could impair cellular functions, and by removing proteins whose functions are no longer required. Therefore, the proteasome participates in numerous cellular processes, including cell cycle progression, apoptosis, or DNA damage repair. PSMC3 belongs to the heterohexameric ring of AAA (ATPases associated with diverse cellular activities) proteins that unfolds ubiquitinated target proteins that are concurrently translocated into a proteolytic chamber and degraded into peptides. The chain is 26S proteasome regulatory subunit 6A (PSMC3) from Homo sapiens (Human).